The following is a 293-amino-acid chain: PHD finger protein 11A (293 aa).

A C2HC pre-PHD-type zinc finger spans residues 25 to 61; that stretch reads KRTCALCPEGHEWSQIYFSPSANIVAHENCLLYSSGL. The segment at 91–143 adopts a PHD-type; degenerate zinc-finger fold; sequence LKCSFCKNKGATMGYDLQSCTKNYHLSCAMEDHAILQVDEDHGTYKLFCQKHA. The segment at 262–293 is disordered; sequence SSSTSGSLLPPEDHQVRCQESPEVQAGSGDSL.

It localises to the nucleus. In Mus musculus (Mouse), this protein is PHD finger protein 11A (Phf11a).